Reading from the N-terminus, the 242-residue chain is 1-(5-phosphoribosyl)-5-[(5-phosphoribosylamino)methylideneamino] imidazole-4-carboxamide isomerase (242 aa).

The active-site Proton acceptor is the Asp-8. Asp-129 (proton donor) is an active-site residue.

It belongs to the HisA/HisF family.

The protein resides in the cytoplasm. The catalysed reaction is 1-(5-phospho-beta-D-ribosyl)-5-[(5-phospho-beta-D-ribosylamino)methylideneamino]imidazole-4-carboxamide = 5-[(5-phospho-1-deoxy-D-ribulos-1-ylimino)methylamino]-1-(5-phospho-beta-D-ribosyl)imidazole-4-carboxamide. Its pathway is amino-acid biosynthesis; L-histidine biosynthesis; L-histidine from 5-phospho-alpha-D-ribose 1-diphosphate: step 4/9. The protein is 1-(5-phosphoribosyl)-5-[(5-phosphoribosylamino)methylideneamino] imidazole-4-carboxamide isomerase of Clostridium botulinum (strain ATCC 19397 / Type A).